The chain runs to 106 residues: Guanylate cyclase activator 2B (106 aa).

The first 21 residues, 1–21 (MSRSQLWAAVVLLLLLQSAQG), serve as a signal peptide directing secretion. Positions 22–91 (VYIKYHGFQV…STFKALRTIA (70 aa)) are excised as a propeptide. Disulfide bonds link C62–C75, C95–C103, and C98–C106.

The protein belongs to the guanylin family. As to expression, localized predominantly in intestinal villi and the corticomedullary junction of the kidney.

It localises to the secreted. Endogenous activator of intestinal guanylate cyclase. It stimulates this enzyme through the same receptor binding region as the heat-stable enterotoxins. May be a potent physiological regulator of intestinal fluid and electrolyte transport. May be an autocrine/paracrine regulator of intestinal salt and water transport. The chain is Guanylate cyclase activator 2B (Guca2b) from Mus musculus (Mouse).